Here is a 212-residue protein sequence, read N- to C-terminus: Ras-related protein Rab-2A (212 aa).

Ala2 is modified (N-acetylalanine). The segment at Ala2–Lys19 is required for interaction with PRKCI. 7 residues coordinate GTP: Gly16, Val17, Gly18, Lys19, Ser20, Cys21, and Thr38. Ser20 lines the Mg(2+) pocket. A Switch 1 motif is present at residues Leu37–Glu42. 2 residues coordinate Mg(2+): Thr38 and Asp61. The short motif at Ala63–Thr72 is the Switch 2 element. GTP is bound by residues Gly64, Asn119, Lys120, Asp122, Ala150, and Lys151. Residues Cys211 and Cys212 are each lipidated (S-geranylgeranyl cysteine).

It belongs to the small GTPase superfamily. Rab family. Interacts with PRKCI. Interacts with TRIP11. Interacts (in GTP-bound form) with GARIN1B. Interacts (GTP-bound) with HOPS complex component VPS39; interaction contributes to obtaining a functional HOPS complex that promotes autophagosome-lysosome membrane fusion driven by STX17-SNAP29-VAMP8. May interact with VPS41. The cofactor is Mg(2+). Post-translationally, prenylated. Prenylation is required for association with cellular membranes. Brain and parietal cells.

It localises to the endoplasmic reticulum-Golgi intermediate compartment membrane. It is found in the melanosome. The protein resides in the endoplasmic reticulum membrane. The protein localises to the golgi apparatus membrane. Its subcellular location is the cytoplasmic vesicle. It localises to the secretory vesicle. It is found in the acrosome. The protein resides in the autophagosome membrane. The catalysed reaction is GTP + H2O = GDP + phosphate + H(+). Regulated by guanine nucleotide exchange factors (GEFs) which promote the exchange of bound GDP for free GTP, GTPase activating proteins (GAPs) which increase the GTP hydrolysis activity, and GDP dissociation inhibitors (GDIs) which inhibit the dissociation of the nucleotide from the GTPase. In terms of biological role, the small GTPases Rab are key regulators of intracellular membrane trafficking, from the formation of transport vesicles to their fusion with membranes. Rabs cycle between active GTP-bound and inactive GDP-bound states. In their active state, drive transport of vesicular carriers from donor organelles to acceptor organelles to regulate the membrane traffic that maintains organelle identity and morphology. RAB2A regulates autophagy by promoting autophagosome-lysosome fusion via recruitment of the HOPS endosomal tethering complex; this process involves autophagosomal RAB2A and lysosomal RAB39A recruitment of HOPS subcomplexes VPS39-VPS11 and VPS41-VPS16-VPS18-VPS33A, respectively, which assemble into a functional complex to mediate membrane tethering and SNAREs-driven membrane fusion. Required for protein transport from the endoplasmic reticulum to the Golgi complex. Regulates the compacted morphology of the Golgi. Together with RAB2B, redundantly required for efficient autophagic flux. The polypeptide is Ras-related protein Rab-2A (RAB2A) (Oryctolagus cuniculus (Rabbit)).